We begin with the raw amino-acid sequence, 364 residues long: tRNA-specific 2-thiouridylase MnmA (364 aa).

ATP-binding positions include 12–19 and Met38; that span reads GISGGVDS. The segment at 98 to 100 is interaction with target base in tRNA; that stretch reads NPD. Cys103 (nucleophile) is an active-site residue. An intrachain disulfide couples Cys103 to Cys199. An ATP-binding site is contributed by Gly127. Residues 149-151 are interaction with tRNA; it reads KEQ. Residue Cys199 is the Cysteine persulfide intermediate of the active site. Residues 311–312 are interaction with tRNA; sequence RY.

This sequence belongs to the MnmA/TRMU family.

It is found in the cytoplasm. It carries out the reaction S-sulfanyl-L-cysteinyl-[protein] + uridine(34) in tRNA + AH2 + ATP = 2-thiouridine(34) in tRNA + L-cysteinyl-[protein] + A + AMP + diphosphate + H(+). Catalyzes the 2-thiolation of uridine at the wobble position (U34) of tRNA, leading to the formation of s(2)U34. This Hahella chejuensis (strain KCTC 2396) protein is tRNA-specific 2-thiouridylase MnmA.